Here is a 468-residue protein sequence, read N- to C-terminus: Ribosomal protein uS12 methylthiotransferase RimO (468 aa).

Positions 18 to 129 (PTVAFAHLGC…IVEVLERVEA (112 aa)) constitute an MTTase N-terminal domain. Cys27, Cys63, Cys92, Cys167, Cys171, and Cys174 together coordinate [4Fe-4S] cluster. Residues 153 to 382 (TTGEAVAYLK…MTLQQPISAA (230 aa)) enclose the Radical SAM core domain. Residues 385–456 (ARWVGRTVDA…IYDLRAEIVG (72 aa)) enclose the TRAM domain.

Belongs to the methylthiotransferase family. RimO subfamily. The cofactor is [4Fe-4S] cluster.

The protein localises to the cytoplasm. The catalysed reaction is L-aspartate(89)-[ribosomal protein uS12]-hydrogen + (sulfur carrier)-SH + AH2 + 2 S-adenosyl-L-methionine = 3-methylsulfanyl-L-aspartate(89)-[ribosomal protein uS12]-hydrogen + (sulfur carrier)-H + 5'-deoxyadenosine + L-methionine + A + S-adenosyl-L-homocysteine + 2 H(+). Catalyzes the methylthiolation of an aspartic acid residue of ribosomal protein uS12. The sequence is that of Ribosomal protein uS12 methylthiotransferase RimO from Synechococcus sp. (strain WH7803).